We begin with the raw amino-acid sequence, 232 residues long: 7-cyano-7-deazaguanine synthase (232 aa).

8 to 18 (FSGGQDSTTCL) contributes to the ATP binding site. The Zn(2+) site is built by Cys-189, Cys-198, Cys-201, and Cys-204.

This sequence belongs to the QueC family. Requires Zn(2+) as cofactor.

It carries out the reaction 7-carboxy-7-deazaguanine + NH4(+) + ATP = 7-cyano-7-deazaguanine + ADP + phosphate + H2O + H(+). Its pathway is purine metabolism; 7-cyano-7-deazaguanine biosynthesis. In terms of biological role, catalyzes the ATP-dependent conversion of 7-carboxy-7-deazaguanine (CDG) to 7-cyano-7-deazaguanine (preQ(0)). The chain is 7-cyano-7-deazaguanine synthase from Yersinia pseudotuberculosis serotype O:1b (strain IP 31758).